The chain runs to 217 residues: Choline transport system permease protein OpuBB (217 aa).

An ABC transmembrane type-1 domain is found at 19–198 (TYEHITISLI…ILAIVIDYVL (180 aa)). 6 helical membrane passes run 23–43 (ITISLIAVILGVLVAVPLGVV), 52–74 (GTIIGIVNIIQTLPSLAILAFFI), 84–101 (AIVALFFYSVLPILRNTY), 128–148 (LVELPLAAPVIMAGIRTSTIY), 150–170 (IGWATLASFIGGGGLGDYIFI), and 180–200 (IIGGAVPVTILAIVIDYVLAV).

Belongs to the binding-protein-dependent transport system permease family. CysTW subfamily.

The protein resides in the cell membrane. Involved in a high affinity multicomponent binding-protein-dependent transport system for choline; probably responsible for the translocation of the substrate across the membrane. In Bacillus subtilis (strain 168), this protein is Choline transport system permease protein OpuBB (opuBB).